The chain runs to 602 residues: Leucine-rich repeat-containing protein 40 (602 aa).

A disordered region spans residues 1-26 (MSRHMRAPRFDPRAGFHAEGKDRGPS). Residues 8–24 (PRFDPRAGFHAEGKDRG) are compositionally biased toward basic and acidic residues. The stretch at 35–58 (ARSSGQLNLAGRNLGEVPQCVWRI) is one LRR 1 repeat. Ser-71 carries the post-translational modification Phosphoserine. LRR repeat units follow at residues 81–103 (QTDLTKLIISSNKLQSLSDDLRL), 104–126 (LPALTVLDIHDNQLTSLPSAIRE), 127–149 (LDNLQKLNVSHNKLKILPEEITS), 150–172 (LKNLRTLHLQHNELTCIPEGFEH), 174–195 (SCLEDLDLSSNRLATVPADFAL), 196–219 (LSSLLRLNLSSNQLKNLPAEISRM), 221–241 (RLKHLDCDANLLETVPPDVGS), 242–266 (MESLELLYLRRNKLRVLPEFPSCRQ), 268–287 (KELHLAENQIEKLGAEHLQH), 288–310 (LQAILVLDLRGNKLRSVPEEMAL), 311–334 (LQSLERLDLSNNDISSLPCSLGNL), 336–356 (LKFLALEGNPLRTIRREIIAK), 398–421 (IATLKLLDYSDKQATLIPDDLFDA), 424–447 (TTLITSINFSKNQLCEIPQRIVEL), 449–470 (EMVLDINLSFNKLSFISHELCL), 471–494 (LQKLTFLDLRNNFLSSLPEEMSSL), 496–517 (KLQTINLSFNRFKVFPEVLYRI), 519–540 (TLEAVLISNNQVGSVDPQKMKL), 541–564 (MENLNTLDLQNNDLLQIPPELGNC), and 566–587 (QLRTLLLDGNPFRVPRAAILMK).

The chain is Leucine-rich repeat-containing protein 40 (Lrrc40) from Mus musculus (Mouse).